We begin with the raw amino-acid sequence, 202 residues long: MNEESASSEYKVITPSGNQCVYTSCYCEENVWKLCEYIKNQRHCPLEEVYAVFISNERKKIPIWKQKSSRGDEPVIWDYHVILLHASKQGPSFIYDLDTILPFPCSLDVYSMEAFQSDKHLKPAYWRKLRVIPGDTYLKEFASDRSHMKDSDGNWRMPPPAYPCLETPESKMNLDDFICMDPRVGYGEVYSLSDFVKHFGVK.

Active-site residues include cysteine 27, histidine 80, and aspartate 96.

Belongs to the NTAQ1 family. Monomer.

It localises to the cytoplasm. The protein resides in the cytosol. The protein localises to the nucleus. It catalyses the reaction N-terminal L-glutaminyl-[protein] + H2O = N-terminal L-glutamyl-[protein] + NH4(+). Its function is as follows. Mediates the side-chain deamidation of N-terminal glutamine residues to glutamate, an important step in N-end rule pathway of protein degradation. Conversion of the resulting N-terminal glutamine to glutamate renders the protein susceptible to arginylation, polyubiquitination and degradation as specified by the N-end rule. Does not act on substrates with internal or C-terminal glutamine and does not act on non-glutamine residues in any position. Does not deaminate acetylated N-terminal glutamine. With the exception of proline, all tested second-position residues on substrate peptides do not greatly influence the activity. In contrast, a proline at position 2, virtually abolishes deamidation of N-terminal glutamine. This Danio rerio (Zebrafish) protein is Protein N-terminal glutamine amidohydrolase (ntaq1).